Consider the following 66-residue polypeptide: Large ribosomal subunit protein bL33c (66 aa).

This sequence belongs to the bacterial ribosomal protein bL33 family.

It localises to the plastid. Its subcellular location is the chloroplast. The polypeptide is Large ribosomal subunit protein bL33c (Citrus sinensis (Sweet orange)).